The chain runs to 231 residues: Aldehyde decarbonylase (231 aa).

Residues glutamate 32, glutamate 60, histidine 63, glutamate 115, and histidine 147 each contribute to the Fe cation site.

Belongs to the aldehyde decarbonylase family. The cofactor is Binds 2 metal cations per subunit. The catalytic dinuclear metal-binding site could be either a di-iron or a manganese-iron cofactor..

It catalyses the reaction a long-chain fatty aldehyde + 2 NADPH + O2 + H(+) = a long-chain alkane + formate + 2 NADP(+) + H2O. Catalyzes the decarbonylation of fatty aldehydes to alkanes. Requires the presence of ferredoxin, ferredoxin reductase and NADPH for in vitro decarbonylase activity. Involved in the biosynthesis of alkanes, mainly heptadecane and pentadecane. The protein is Aldehyde decarbonylase of Synechococcus elongatus (strain ATCC 33912 / PCC 7942 / FACHB-805) (Anacystis nidulans R2).